A 402-amino-acid polypeptide reads, in one-letter code: Probable 2,3-bisphosphoglycerate-independent phosphoglycerate mutase (402 aa).

The protein belongs to the BPG-independent phosphoglycerate mutase family. A-PGAM subfamily.

It carries out the reaction (2R)-2-phosphoglycerate = (2R)-3-phosphoglycerate. The protein operates within carbohydrate degradation; glycolysis; pyruvate from D-glyceraldehyde 3-phosphate: step 3/5. In terms of biological role, catalyzes the interconversion of 2-phosphoglycerate and 3-phosphoglycerate. In Thermosipho melanesiensis (strain DSM 12029 / CIP 104789 / BI429), this protein is Probable 2,3-bisphosphoglycerate-independent phosphoglycerate mutase.